Reading from the N-terminus, the 237-residue chain is Riboflavin kinase (237 aa).

Residues 1 to 23 (MSLPNPDNRPLLIGPPTGPEAPF) form a disordered region. Thr46 and Asn48 together coordinate Mg(2+). Residues 82–126 (VLYQKPPTSEPVMMDPVQQQQQQQQQQRNQQQQQEGGVGSAQQEK) form a disordered region. Positions 99 to 115 (QQQQQQQQQQRNQQQQQ) are enriched in low complexity. Glu158 serves as the catalytic Nucleophile.

Belongs to the flavokinase family. Zn(2+) is required as a cofactor. Requires Mg(2+) as cofactor.

The enzyme catalyses riboflavin + ATP = FMN + ADP + H(+). It functions in the pathway cofactor biosynthesis; FMN biosynthesis; FMN from riboflavin (ATP route): step 1/1. Its function is as follows. Catalyzes the phosphorylation of riboflavin (vitamin B2) to form flavin mononucleotide (FMN) coenzyme. This is Riboflavin kinase (fmn1) from Neurospora crassa (strain ATCC 24698 / 74-OR23-1A / CBS 708.71 / DSM 1257 / FGSC 987).